The primary structure comprises 196 residues: Charged multivesicular body protein 1a (196 aa).

A coiled-coil region spans residues 5-41 (LFQLKFTAKQLEKLAKKAEKDSNTEQAKVKKALQQKN). Over residues 170-181 (QGASSVGESSTR) the composition is skewed to polar residues. Positions 170 to 196 (QGASSVGESSTRTQEDQLSRRLASLRN) are disordered. An MIT-interacting motif motif is present at residues 185–195 (DQLSRRLASLR).

Belongs to the SNF7 family. Probable peripherally associated component of the endosomal sorting required for transport complex III (ESCRT-III).

It localises to the cytoplasm. Its subcellular location is the endosome membrane. In terms of biological role, probable peripherally associated component of the endosomal sorting required for transport complex III (ESCRT-III) which is involved in multivesicular bodies (MVBs) formation and sorting of endosomal cargo proteins into MVBs. MVBs contain intraluminal vesicles (ILVs) that are generated by invagination and scission from the limiting membrane of the endosome and mostly are delivered to lysosomes enabling degradation of membrane proteins, such as stimulated growth factor receptors, lysosomal enzymes and lipids. In Xenopus laevis (African clawed frog), this protein is Charged multivesicular body protein 1a (chmp1a).